Here is a 482-residue protein sequence, read N- to C-terminus: Glutamate-rich WD repeat-containing protein 1 (482 aa).

Disordered regions lie at residues 1 to 75 (MSSK…WRAG) and 148 to 180 (QLHK…EDKD). Composition is skewed to acidic residues over residues 27–63 (NGED…DNDG) and 157–180 (EDSD…EDKD). WD repeat units lie at residues 191-231 (NHNG…KALD), 294-334 (GHTE…PAIT), 337-377 (AHTA…DNSP), 383-423 (YHTG…DTEE), and 446-482 (QGQH…NSEE).

It is found in the nucleus. The protein resides in the nucleolus. This Dictyostelium discoideum (Social amoeba) protein is Glutamate-rich WD repeat-containing protein 1 (grwd1).